The chain runs to 157 residues: SsrA-binding protein (157 aa).

The interval 133 to 157 (LHDKRETEKKRDWSREKGRLLRARG) is disordered. Over residues 135–151 (DKRETEKKRDWSREKGR) the composition is skewed to basic and acidic residues.

It belongs to the SmpB family.

The protein resides in the cytoplasm. Its function is as follows. Required for rescue of stalled ribosomes mediated by trans-translation. Binds to transfer-messenger RNA (tmRNA), required for stable association of tmRNA with ribosomes. tmRNA and SmpB together mimic tRNA shape, replacing the anticodon stem-loop with SmpB. tmRNA is encoded by the ssrA gene; the 2 termini fold to resemble tRNA(Ala) and it encodes a 'tag peptide', a short internal open reading frame. During trans-translation Ala-aminoacylated tmRNA acts like a tRNA, entering the A-site of stalled ribosomes, displacing the stalled mRNA. The ribosome then switches to translate the ORF on the tmRNA; the nascent peptide is terminated with the 'tag peptide' encoded by the tmRNA and targeted for degradation. The ribosome is freed to recommence translation, which seems to be the essential function of trans-translation. The sequence is that of SsrA-binding protein from Bradyrhizobium diazoefficiens (strain JCM 10833 / BCRC 13528 / IAM 13628 / NBRC 14792 / USDA 110).